We begin with the raw amino-acid sequence, 137 residues long: Proline-rich protein 13 (137 aa).

Disordered stretches follow at residues 26-54 (PPPLNPAFPPGPCPPGIPQGNPAFPPCRP) and 94-137 (VGPG…SDSD). The span at 103 to 124 (KTRKKMKKAHKKSHKHHKHGKH) shows a compositional bias: basic residues. Low complexity predominate over residues 125–137 (SSSSSSSSSSDSD).

The protein resides in the nucleus. Negatively regulates TSP1 expression at the level of transcription. This down-regulation was shown to reduce taxane-induced apoptosis. The sequence is that of Proline-rich protein 13 (Prr13) from Mus musculus (Mouse).